Consider the following 180-residue polypeptide: GTP cyclohydrolase 1 (180 aa).

Residues C71, H74, and C142 each contribute to the Zn(2+) site.

The protein belongs to the GTP cyclohydrolase I family. Homomer.

The enzyme catalyses GTP + H2O = 7,8-dihydroneopterin 3'-triphosphate + formate + H(+). The protein operates within cofactor biosynthesis; 7,8-dihydroneopterin triphosphate biosynthesis; 7,8-dihydroneopterin triphosphate from GTP: step 1/1. The protein is GTP cyclohydrolase 1 of Helicobacter pylori (strain P12).